We begin with the raw amino-acid sequence, 405 residues long: Serine/threonine transporter SstT (405 aa).

8 helical membrane-spanning segments follow: residues 13-33 (GGSL…LAGF), 43-63 (FLGD…VFVL), 82-102 (IILL…LMSF), 141-161 (ALIN…GIAL), 185-205 (FVIC…IAQT), 217-237 (LGVL…LIVF), 298-318 (MAGA…TLGI), and 339-359 (ASGV…LFGI).

Belongs to the dicarboxylate/amino acid:cation symporter (DAACS) (TC 2.A.23) family.

Its subcellular location is the cell inner membrane. The enzyme catalyses L-serine(in) + Na(+)(in) = L-serine(out) + Na(+)(out). It carries out the reaction L-threonine(in) + Na(+)(in) = L-threonine(out) + Na(+)(out). Involved in the import of serine and threonine into the cell, with the concomitant import of sodium (symport system). The protein is Serine/threonine transporter SstT of Shewanella amazonensis (strain ATCC BAA-1098 / SB2B).